Reading from the N-terminus, the 772-residue chain is MELLYKNIWIVPVCPFVASMSVGLGLFFFPKATKSLRRICAIISIFLLGIAMFISFSIFWQQIRGNPNHQLLWSWFFNKDISLQIGFLIDPLTSTMLVSVTSVGILVMIYSDSYMSHDQGYVRFFAYLSLFTASMLGLVLSPNPVQIYIFWELVGMCSYLLIGFWFSRPSAANACQKAFITNRVGDFGLLLGILGTYWITGSFDIHSLSERFNDLIDSNGVNLFLANMCALLLFLGPAAKSAQFPLHVWLPDAMEGPTPISALIHAATMVAAGIFFVARMFHFFEALPFTMNIISWVGGITALLGATIALAQKDLKKGLAYSTMSQPGYMMLAPGIGSYRAASFHLITHAYSKALLFLGSGSVIHSMEPIVGYSPEKSQNMSFMGGLRKYMPITGTTFLLGTLSLCGIPPFACFWSKDEILVDSWIASASLGWIAWCTAGLTGFYMFRMYFVTFEGDFRGNLSYKDTDKSVSYKSIWGNLQTLSERDKVFSNNSYTSFSDPTGDFYEIPENVFSLPERRIKNKSLNIEKSFNVLSDFKGSDNRNEISEDAFVSINREIRNENILYPNESDNSMLFSLISLAIPTLFIGFIGVPFSHKGINSDLLSDLLAPLTDSFHKDNSENLVDFFLKSIPSVSIALVGVSISFFIYGPVSSRDLRKEIDPKTKDFLGYFFNSLSNWSYYRGYIDNLYNVIFIEGTRILSKSICFFDQWIIDGIVNGIGILSFFGGEGMRYGEGGRIPSYLFGLIIGNILMLIILIIKNDIIQSYEYFTMF.

The next 15 membrane-spanning stretches (helical) occupy residues 8–28, 39–59, 87–107, 120–140, 147–167, 185–205, 219–239, 258–278, 291–311, 395–415, 425–445, 574–594, 631–651, 710–730, and 738–758; these read IWIVPVCPFVASMSVGLGLFF, ICAIISIFLLGIAMFISFSIF, FLIDPLTSTMLVSVTSVGILV, GYVRFFAYLSLFTASMLGLVL, IYIFWELVGMCSYLLIGFWFS, GDFGLLLGILGTYWITGSFDI, NGVNLFLANMCALLLFLGPAA, TPISALIHAATMVAAGIFFVA, MNIISWVGGITALLGATIALA, GTTFLLGTLSLCGIPPFACFW, WIASASLGWIAWCTAGLTGFY, LFSLISLAIPTLFIGFIGVPF, IPSVSIALVGVSISFFIYGPV, WIIDGIVNGIGILSFFGGEGM, and IPSYLFGLIIGNILMLIILII.

The protein belongs to the complex I subunit 5 family. In terms of assembly, NDH is composed of at least 16 different subunits, 5 of which are encoded in the nucleus.

The protein localises to the plastid. Its subcellular location is the chloroplast thylakoid membrane. It carries out the reaction a plastoquinone + NADH + (n+1) H(+)(in) = a plastoquinol + NAD(+) + n H(+)(out). The enzyme catalyses a plastoquinone + NADPH + (n+1) H(+)(in) = a plastoquinol + NADP(+) + n H(+)(out). Functionally, NDH shuttles electrons from NAD(P)H:plastoquinone, via FMN and iron-sulfur (Fe-S) centers, to quinones in the photosynthetic chain and possibly in a chloroplast respiratory chain. The immediate electron acceptor for the enzyme in this species is believed to be plastoquinone. Couples the redox reaction to proton translocation, and thus conserves the redox energy in a proton gradient. The protein is NAD(P)H-quinone oxidoreductase subunit 5, chloroplastic (ndhF) of Angiopteris evecta (Mule's foot fern).